Consider the following 122-residue polypeptide: Photosystem II extrinsic protein U (122 aa).

The signal sequence occupies residues methionine 1–alanine 26.

The protein belongs to the PsbU family. In terms of assembly, PSII is composed of 1 copy each of membrane proteins PsbA, PsbB, PsbC, PsbD, PsbE, PsbF, PsbH, PsbI, PsbJ, PsbK, PsbL, PsbM, PsbT, PsbX, PsbY, PsbZ, Psb30/Ycf12, peripheral proteins PsbO, CyanoQ (PsbQ), PsbU, PsbV and a large number of cofactors. It forms dimeric complexes.

Its subcellular location is the cellular thylakoid membrane. Its function is as follows. One of the extrinsic, lumenal subunits of photosystem II (PSII). PSII is a light-driven water plastoquinone oxidoreductase, using light energy to abstract electrons from H(2)O, generating a proton gradient subsequently used for ATP formation. The extrinsic proteins stabilize the structure of photosystem II oxygen-evolving complex (OEC), the ion environment of oxygen evolution and protect the OEC against heat-induced inactivation. This is Photosystem II extrinsic protein U from Crocosphaera subtropica (strain ATCC 51142 / BH68) (Cyanothece sp. (strain ATCC 51142)).